We begin with the raw amino-acid sequence, 162 residues long: UPF0262 protein Acry_0160 (162 aa).

This sequence belongs to the UPF0262 family.

This is UPF0262 protein Acry_0160 from Acidiphilium cryptum (strain JF-5).